A 180-amino-acid chain; its full sequence is Large ribosomal subunit protein uL5 (180 aa).

Belongs to the universal ribosomal protein uL5 family. As to quaternary structure, part of the 50S ribosomal subunit; part of the 5S rRNA/L5/L18/L25 subcomplex. Contacts the 5S rRNA and the P site tRNA. Forms a bridge to the 30S subunit in the 70S ribosome.

In terms of biological role, this is one of the proteins that bind and probably mediate the attachment of the 5S RNA into the large ribosomal subunit, where it forms part of the central protuberance. In the 70S ribosome it contacts protein S13 of the 30S subunit (bridge B1b), connecting the 2 subunits; this bridge is implicated in subunit movement. Contacts the P site tRNA; the 5S rRNA and some of its associated proteins might help stabilize positioning of ribosome-bound tRNAs. This chain is Large ribosomal subunit protein uL5, found in Oenococcus oeni (strain ATCC BAA-331 / PSU-1).